Consider the following 522-residue polypeptide: Sugar carrier protein A (522 aa).

Over 1 to 22 (MAGGSLAPAGVAKERAEQYQGK) the chain is Cytoplasmic. The next 12 membrane-spanning stretches (helical) occupy residues 23–43 (VTFA…IFGY), 87–107 (AFTS…GPIT), 121–141 (ISFL…MLLL), 144–164 (IMLG…LSEM), 173–193 (LNIM…MVNY), 205–225 (LSLG…LLLP), 286–306 (LVMA…IILF), 322–342 (ALYS…ISIA), 351–371 (FLLI…AIIL), 384–404 (SFSV…GWSW), 430–450 (AVNL…LCAF), and 453–473 (GIFL…YIFL). Residues 474-522 (PETKGVPIEEMIFLWRKHWFWKKIVPGQPEVDDSRESMEMGEAVASRIK) are Cytoplasmic-facing.

This sequence belongs to the major facilitator superfamily. Sugar transporter (TC 2.A.1.1) family.

The protein resides in the membrane. The protein is Sugar carrier protein A (STA) of Ricinus communis (Castor bean).